A 316-amino-acid chain; its full sequence is L-lactate dehydrogenase (316 aa).

Residues Val15, Asp37, Lys42, Tyr68, and 82–83 (GL) each bind NAD(+). Substrate is bound by residues Gln85, Arg91, and 123-126 (NPVD). NAD(+) is bound by residues 121–123 (ASN) and Thr146. 151-154 (DTSR) is a substrate binding site. Beta-D-fructose 1,6-bisphosphate is bound by residues Arg156 and His171. His178 serves as the catalytic Proton acceptor. Tyr222 bears the Phosphotyrosine mark. Substrate is bound at residue Thr231.

This sequence belongs to the LDH/MDH superfamily. LDH family. In terms of assembly, homotetramer.

The protein resides in the cytoplasm. It catalyses the reaction (S)-lactate + NAD(+) = pyruvate + NADH + H(+). Its pathway is fermentation; pyruvate fermentation to lactate; (S)-lactate from pyruvate: step 1/1. Its activity is regulated as follows. Allosterically activated by fructose 1,6-bisphosphate (FBP). Its function is as follows. Catalyzes the conversion of lactate to pyruvate. The protein is L-lactate dehydrogenase of Borrelia hermsii (strain HS1 / DAH).